We begin with the raw amino-acid sequence, 159 residues long: NAD(P)H-quinone oxidoreductase subunit J, chloroplastic (159 aa).

Belongs to the complex I 30 kDa subunit family. In terms of assembly, NDH is composed of at least 16 different subunits, 5 of which are encoded in the nucleus.

It localises to the plastid. The protein resides in the chloroplast thylakoid membrane. It catalyses the reaction a plastoquinone + NADH + (n+1) H(+)(in) = a plastoquinol + NAD(+) + n H(+)(out). The enzyme catalyses a plastoquinone + NADPH + (n+1) H(+)(in) = a plastoquinol + NADP(+) + n H(+)(out). Functionally, NDH shuttles electrons from NAD(P)H:plastoquinone, via FMN and iron-sulfur (Fe-S) centers, to quinones in the photosynthetic chain and possibly in a chloroplast respiratory chain. The immediate electron acceptor for the enzyme in this species is believed to be plastoquinone. Couples the redox reaction to proton translocation, and thus conserves the redox energy in a proton gradient. The sequence is that of NAD(P)H-quinone oxidoreductase subunit J, chloroplastic from Agrostis stolonifera (Creeping bentgrass).